A 331-amino-acid chain; its full sequence is Beta-ketoacyl-[acyl-carrier-protein] synthase III (331 aa).

Active-site residues include cysteine 115 and histidine 255. The ACP-binding stretch occupies residues 256-260 (QANFR). The active site involves asparagine 285.

The protein belongs to the thiolase-like superfamily. FabH family. In terms of assembly, homodimer.

It is found in the cytoplasm. It catalyses the reaction malonyl-[ACP] + acetyl-CoA + H(+) = 3-oxobutanoyl-[ACP] + CO2 + CoA. It functions in the pathway lipid metabolism; fatty acid biosynthesis. Its function is as follows. Catalyzes the condensation reaction of fatty acid synthesis by the addition to an acyl acceptor of two carbons from malonyl-ACP. Catalyzes the first condensation reaction which initiates fatty acid synthesis and may therefore play a role in governing the total rate of fatty acid production. Possesses both acetoacetyl-ACP synthase and acetyl transacylase activities. Its substrate specificity determines the biosynthesis of branched-chain and/or straight-chain of fatty acids. In Helicobacter pylori (strain Shi470), this protein is Beta-ketoacyl-[acyl-carrier-protein] synthase III.